A 573-amino-acid polypeptide reads, in one-letter code: MPEISRPAYADLFGPTTGDRIRLADTDLLIEIEEDRSGGPGLAGDEAVFGGGKVIRESMGQARATRADGTPDTVITGVVIVDHWGIVKADVGMRDGRITGIGKAGNPDTMDGVHPDLVIGPETEIIAGNGRILTAGAIDAHVHLICPQIADEALGSGITTLVGGGTGPAEGSKATTVTPGPWHLARMLEAMEEYPLNFGLLGKGNTVSHDAMLSQIRGGALGLKLHEDWGSTPAVIDAALTVADRTGVQIAIHTDTLNEAGFVGDTLAAIGGRGIHAYHTEGAGGGHAPDIMSVVSEPHVLPSSTNPTRPFTVNTAEEHLDMLMVCHHLNPAVPEDLAFAESRIRPSTIGAEDILHDLGAISIISSDAQAMGRVGEVIMRTWQTAHVMKRRRGALPGDGRADNHRVRRYVAKYTINPALAQGLAREIGSVETGKLADLVLWEPAFFGVKPHLVIKGGQIAYAQMGDANASIPTPQPILPRPMFGAIGRAPASNSFNFVAPLAIEDGLPERLSLGKRFVAIESTRGVTKADMRENDARPRVRIDPDSFAVHIDGELVEATPAAELPMAQRYFLF.

Positions 136 to 573 (GAIDAHVHLI…LPMAQRYFLF (438 aa)) constitute a Urease domain. Positions 141, 143, and 224 each coordinate Ni(2+). The residue at position 224 (K224) is an N6-carboxylysine. H226 lines the substrate pocket. Ni(2+) contacts are provided by H253 and H279. H327 (proton donor) is an active-site residue. D367 serves as a coordination point for Ni(2+).

Belongs to the metallo-dependent hydrolases superfamily. Urease alpha subunit family. In terms of assembly, may form a heterohexamer of 3 UreC (alpha) and 3 UreAB (gamma/beta) subunits. May also form a heterotrimer of UreA (gamma), UreB (beta) and UreC (alpha) subunits. Three heterotrimers associate to form the active enzyme. Requires Ni cation as cofactor. Post-translationally, carboxylation allows a single lysine to coordinate two nickel ions.

It is found in the cytoplasm. The catalysed reaction is urea + 2 H2O + H(+) = hydrogencarbonate + 2 NH4(+). The protein operates within nitrogen metabolism; urea degradation; CO(2) and NH(3) from urea (urease route): step 1/1. This is Urease subunit alpha 2 from Streptomyces avermitilis (strain ATCC 31267 / DSM 46492 / JCM 5070 / NBRC 14893 / NCIMB 12804 / NRRL 8165 / MA-4680).